The following is a 152-amino-acid chain: Stigma-specific STIG1-like protein 1 (152 aa).

The N-terminal stretch at 1 to 19 is a signal peptide; the sequence is MAFVKLLVSIAITTAITIA.

The protein belongs to the STIG1 family.

This is Stigma-specific STIG1-like protein 1 from Arabidopsis thaliana (Mouse-ear cress).